Reading from the N-terminus, the 294-residue chain is Proteasome subunit beta (294 aa).

The propeptide at 1 to 65 is removed in mature form; by autocatalysis; the sequence is MTADRPALRT…MESGDLAPHG (65 aa). Thr66 (nucleophile) is an active-site residue.

Belongs to the peptidase T1B family. As to quaternary structure, the 20S proteasome core is composed of 14 alpha and 14 beta subunits that assemble into four stacked heptameric rings, resulting in a barrel-shaped structure. The two inner rings, each composed of seven catalytic beta subunits, are sandwiched by two outer rings, each composed of seven alpha subunits. The catalytic chamber with the active sites is on the inside of the barrel. Has a gated structure, the ends of the cylinder being occluded by the N-termini of the alpha-subunits. Is capped by the proteasome-associated ATPase, ARC.

The protein resides in the cytoplasm. The enzyme catalyses Cleavage of peptide bonds with very broad specificity.. It participates in protein degradation; proteasomal Pup-dependent pathway. Its activity is regulated as follows. The formation of the proteasomal ATPase ARC-20S proteasome complex, likely via the docking of the C-termini of ARC into the intersubunit pockets in the alpha-rings, may trigger opening of the gate for substrate entry. Interconversion between the open-gate and close-gate conformations leads to a dynamic regulation of the 20S proteasome proteolysis activity. Functionally, component of the proteasome core, a large protease complex with broad specificity involved in protein degradation. This is Proteasome subunit beta from Rhodococcus jostii (strain RHA1).